Reading from the N-terminus, the 977-residue chain is MGSKQVSKTRNGGFSKLKTVESSASSTTSSSKLYQEASVDSHSSPTSSSVRSKPQLPPKPLQSKENVTVTVRFRPLSPREIRKGEEIAWYADGETIVRNENNQSIAYAYDRVFGPTTTTRNVYDVAAQHVVNGAMAGVNGTIFAYGVTSSGKTHTMHGNQRSPGIIPLAVKDAFSIIQETPRREFLLRVSYFEIYNEVVNDLLNPAGQNLRIREDEQGTYIEGIKEEVVLSPAHVLSLIAAGEEHRHIGSTSFNLLSSRSHTMFTLTIESSPLGDNNEGGAVHLSQLNLIDLAGSESSKAETSGLRRKEGSYINKSLLTLGTVISKLTDRRASHVPYRDSKLTRLLESSLSGHGRVSLICTVTPASSNSEETHNTLKFAHRAKHIEIQAAQNKIIDEKSLIKKYQYEIRQLKEELEQLKQGIKPVSQLKDISGDDIDIVLLKQKLEEEEDAKAALLSRIQRLTKLILVSNKTPQTSRFSYRADPRRRHSFGEEELAYLPHKRRDLTDDENLELYVSREGTPEIIDDAFIEEKKTRKHGLLNWLKIKKKDSSLGGSSLSDKSSAVKSNSTPSTPQGEGSDFHTESRLSEGSALADQIIETMENREAHEDSFHEIETPETRIKMIDQMEILREQQKTLSEEMAQQSRSFKLLSEEAAKAPQNEEIKAEIINLNGDIKAKNDQIATLGKQILDFVIASHDELDKSDIVQAVSEMRAQLNEKCFELEVKAADNRIIQEQLTEKTSFCEDLQEEVANLKQQLSDALELGDINSVTCHMQQSSQSPNKNEEKVIEAQAFEIEELKLKAAELSELNEQLEIRNKKLAEESSYAKELASAAAIELKALSEEIARLMNHNERLAADLAAVQKSSVTTPQGKTGNLRNGRRESVSKRKEQENSLMELKRELTVSKEREVSFEAALIEKIQREAELQRTVEESKQREAYLENELANMWGLVAKLRSQGAANSGLSDSVSETRIEHFGT.

A compositionally biased stretch (polar residues) spans 1–12 (MGSKQVSKTRNG). Positions 1 to 66 (MGSKQVSKTR…PPKPLQSKEN (66 aa)) are disordered. Composition is skewed to low complexity over residues 22–31 (SSASSTTSSS) and 38–54 (SVDS…RSKP). The 320-residue stretch at 66-385 (NVTVTVRFRP…LKFAHRAKHI (320 aa)) folds into the Kinesin motor domain. 146 to 153 (GVTSSGKT) is an ATP binding site. Positions 386–471 (EIQAAQNKII…LTKLILVSNK (86 aa)) form a coiled coil. A disordered region spans residues 549-589 (DSSLGGSSLSDKSSAVKSNSTPSTPQGEGSDFHTESRLSEG). Positions 551-561 (SLGGSSLSDKS) are enriched in low complexity. Residues 563–575 (AVKSNSTPSTPQG) are compositionally biased toward polar residues. Coiled coils occupy residues 626-688 (MEIL…GKQI) and 732-942 (IQEQ…LENE). Polar residues predominate over residues 864 to 876 (SSVTTPQGKTGNL). Disordered stretches follow at residues 864–891 (SSVT…KEQE) and 958–977 (AANS…HFGT). Residues 879–891 (GRRESVSKRKEQE) show a composition bias toward basic and acidic residues. A compositionally biased stretch (polar residues) spans 958-967 (AANSGLSDSV). Basic and acidic residues predominate over residues 968–977 (SETRIEHFGT).

This sequence belongs to the TRAFAC class myosin-kinesin ATPase superfamily. Kinesin family. KIN-7 subfamily.

The protein localises to the plastid. Its subcellular location is the chloroplast. This is Kinesin-like protein KIN-7L, chloroplastic from Arabidopsis thaliana (Mouse-ear cress).